The chain runs to 160 residues: MTTFEGRFTDTADLRIAVVVARFNDLVTSKLLSGCLDCLSRHGIDTAETSSQLDVAWVPGSFELPIVAQNLAQSGRYQVVITLGAVIRGDTPHFDVVVAEASKGIATVARESGVPVIFGVLTTDTMQQALERAGIKSNLGWSYGLQALEMGSLMAALAQS.

5-amino-6-(D-ribitylamino)uracil is bound by residues Phe-23, 61–63, and 85–87; these read SFE and AVI. A (2S)-2-hydroxy-3-oxobutyl phosphate-binding site is contributed by 90–91; the sequence is DT. The active-site Proton donor is His-93. 5-amino-6-(D-ribitylamino)uracil is bound at residue Phe-118. Arg-132 provides a ligand contact to (2S)-2-hydroxy-3-oxobutyl phosphate.

Belongs to the DMRL synthase family.

The catalysed reaction is (2S)-2-hydroxy-3-oxobutyl phosphate + 5-amino-6-(D-ribitylamino)uracil = 6,7-dimethyl-8-(1-D-ribityl)lumazine + phosphate + 2 H2O + H(+). Its pathway is cofactor biosynthesis; riboflavin biosynthesis; riboflavin from 2-hydroxy-3-oxobutyl phosphate and 5-amino-6-(D-ribitylamino)uracil: step 1/2. Catalyzes the formation of 6,7-dimethyl-8-ribityllumazine by condensation of 5-amino-6-(D-ribitylamino)uracil with 3,4-dihydroxy-2-butanone 4-phosphate. This is the penultimate step in the biosynthesis of riboflavin. In Parasynechococcus marenigrum (strain WH8102), this protein is 6,7-dimethyl-8-ribityllumazine synthase.